A 1304-amino-acid chain; its full sequence is TPR-containing protein DDB_G0280363 (1304 aa).

6 disordered regions span residues 19 to 85 (QQHH…HPQQ), 153 to 195 (NINN…NSSL), 296 to 334 (LPST…YTQQ), 447 to 477 (GFNW…QRQQ), 576 to 687 (QNQQ…VTTI), and 706 to 728 (LTTV…VESP). Composition is skewed to low complexity over residues 25–44 (QQNN…QFNQ), 52–85 (HQQH…HPQQ), and 153–194 (NINN…NNSS). Residues 296 to 306 (LPSTNSSIVSR) are compositionally biased toward polar residues. Positions 307–316 (QQQLQQQQQK) are enriched in low complexity. Polar residues predominate over residues 448–465 (FNWSPSLQPDQSTSTNHT). Low complexity-rich tracts occupy residues 466–477 (QAMLQQQQQRQQ) and 576–597 (QNQQ…PNQH). The span at 598–625 (HGQHQHNQHNQHHNQHHNQSHPNHKNQH) shows a compositional bias: basic residues. Residues 626 to 687 (QKQNQTQQST…NNNTNNVTTI (62 aa)) are compositionally biased toward low complexity. TPR repeat units lie at residues 769–802 (WRVY…QPYI), 899–932 (MKHV…VEKG), 978–1011 (WKIY…CPEN), 1046–1079 (SKLR…AHVE), 1084–1111 (WKVF…KESL), 1112–1150 (KIHS…VPKS), and 1152–1184 (EVWC…TPQF).

The chain is TPR-containing protein DDB_G0280363 from Dictyostelium discoideum (Social amoeba).